Consider the following 444-residue polypeptide: Spermatogenesis-associated protein 1 (444 aa).

Positions 268-403 (SLLKIEREKI…RKLDTDKMKL (136 aa)) form a coiled coil.

Interacts with IFT20. Highly abundant in the testis, and is also expressed in the heart and kidney (at protein level).

It is found in the cytoplasmic vesicle. Its subcellular location is the secretory vesicle. It localises to the acrosome. This chain is Spermatogenesis-associated protein 1 (Spata1), found in Mus musculus (Mouse).